The following is a 379-amino-acid chain: UDP-4-amino-4-deoxy-L-arabinose--oxoglutarate aminotransferase (379 aa).

Lys182 bears the N6-(pyridoxal phosphate)lysine mark.

Belongs to the DegT/DnrJ/EryC1 family. ArnB subfamily. In terms of assembly, homodimer. Pyridoxal 5'-phosphate serves as cofactor.

It catalyses the reaction UDP-4-amino-4-deoxy-beta-L-arabinose + 2-oxoglutarate = UDP-beta-L-threo-pentopyranos-4-ulose + L-glutamate. It functions in the pathway nucleotide-sugar biosynthesis; UDP-4-deoxy-4-formamido-beta-L-arabinose biosynthesis; UDP-4-deoxy-4-formamido-beta-L-arabinose from UDP-alpha-D-glucuronate: step 2/3. Its pathway is bacterial outer membrane biogenesis; lipopolysaccharide biosynthesis. Functionally, catalyzes the conversion of UDP-4-keto-arabinose (UDP-Ara4O) to UDP-4-amino-4-deoxy-L-arabinose (UDP-L-Ara4N). The modified arabinose is attached to lipid A and is required for resistance to polymyxin and cationic antimicrobial peptides. The protein is UDP-4-amino-4-deoxy-L-arabinose--oxoglutarate aminotransferase of Escherichia coli O127:H6 (strain E2348/69 / EPEC).